A 721-amino-acid chain; its full sequence is MLPRGRPRALGAAALLLLLLLLGFLLFGGDLGCERREPGGRAGAPGCFPGPLMPRVPPDGRLRRAAALDGDPGAGPGDHNRSDCGPQPPPPPKCELLHVAIVCAGHNSSRDVITLVKSMLFYRKNPLHLHLVTDAVARNILETLFHTWMVPAVRVSFYHADQLKPQVSWIPNKHYSGLYGLMKLVLPSALPAELARVIVLDTDVTFASDISELWALFAHFSDTQAIGLVENQSDWYLGNLWKNHRPWPALGRGFNTGVILLRLDRLRQAGWEQMWRLTARRELLSLPATSLADQDIFNAVIKEHPGLVQRLPCVWNVQLSDHTLAERCYSEASDLKVIHWNSPKKLRVKNKHVEFFRNFYLTFLEYDGNLLRRELFVCPSQPPPGAEQLQQALAQLDEEDPCFEFRQQQLTVHRVHVTFLPHEPPPPRPHDVTLVAQLSMDRLQMLEALCRHWPGPMSLALYLTDAEAQQFLHFVEASPVLAARQDVAYHVVYREGPLYPVNQLRNVALAQALTPYVFLSDIDFLPAYSLYDYLRASIEQLGLGSRRKAALVVPAFETLRYRFSFPHSKVELLALLDAGTLYTFRYHEWPRGHAPTDYARWREAQAPYRVQWAANYEPYVVVPRDCPRYDPRFVGFGWNKVAHIVELDAQEYELLVLPEAFTIHLPHAPSLDISRFRSSPTYRDCLQALKDEFHQDLSRHHGAAALKYLPALQQPQSPARG.

Residues 1-8 (MLPRGRPR) lie on the Cytoplasmic side of the membrane. The chain crosses the membrane as a helical; Signal-anchor for type II membrane protein span at residues 9–29 (ALGAAALLLLLLLLGFLLFGG). Over 30 to 721 (DLGCERREPG…LQQPQSPARG (692 aa)) the chain is Lumenal. The disordered stretch occupies residues 59–89 (DGRLRRAAALDGDPGAGPGDHNRSDCGPQPP). N-linked (GlcNAc...) asparagine glycosylation is found at Asn-80 and Asn-107. Residues 97–372 (LHVAIVCAGH…FLEYDGNLLR (276 aa)) are xylosyltransferase activity. Mn(2+)-binding residues include Asp-201 and Asp-203. The N-linked (GlcNAc...) asparagine glycan is linked to Asn-231. The segment at 373-715 (RELFVCPSQP…LKYLPALQQP (343 aa)) is glucuronyltransferase activity. Positions 521 and 523 each coordinate Mn(2+).

This sequence in the C-terminal section; belongs to the glycosyltransferase 49 family. In the N-terminal section; belongs to the glycosyltransferase 8 family. As to quaternary structure, interacts with B4GAT1. Mn(2+) is required as a cofactor. In terms of tissue distribution, widely expressed. Expressed at high level in placenta, pancreas and kidney compared to LARGE. Not expressed in brain.

It localises to the golgi apparatus membrane. The enzyme catalyses 3-O-[beta-D-GlcA-(1-&gt;3)-beta-D-Xyl-(1-&gt;4)-Rib-ol-P-Rib-ol-P-3-beta-D-GalNAc-(1-&gt;3)-beta-D-GlcNAc-(1-&gt;4)-(O-6-P-alpha-D-Man)]-Thr-[protein] + UDP-alpha-D-xylose = 3-O-[alpha-D-Xyl-(1-&gt;3)-beta-D-GlcA-(1-&gt;4)-beta-D-Xyl-(1-&gt;4)-Rib-ol-P-Rib-ol-P-3-beta-D-GalNAc-(1-&gt;3)-beta-D-GlcNAc-(1-&gt;4)-(O-6-P-alpha-D-Man)]-Thr-[protein] + UDP + H(+). It carries out the reaction 3-O-{(1-&gt;[3)-alpha-D-Xyl-(1-&gt;3)-beta-D-GlcA-(1-&gt;](n)-4)-beta-D-Xyl-(1-&gt;4)-Rib-ol-P-Rib-ol-P-3-beta-D-GalNAc-(1-&gt;3)-beta-D-GlcNAc-(1-&gt;4)-O-6-P-alpha-D-Man}-L-Thr-[protein] + UDP-alpha-D-glucuronate = 3-O-{beta-D-GlcA-(1-&gt;[3)-alpha-D-Xyl-(1-&gt;3)-beta-D-GlcA-(1-&gt;](n)-4)-beta-D-Xyl-(1-&gt;4)-Rib-ol-P-Rib-ol-P-3-beta-D-GalNAc-(1-&gt;3)-beta-D-GlcNAc-(1-&gt;4)-O-6-P-alpha-D-Man}-L-Thr-[protein] + UDP + H(+). The catalysed reaction is 3-O-{beta-D-GlcA-(1-&gt;[3)-alpha-D-Xyl-(1-&gt;3)-beta-D-GlcA-(1-&gt;](n)-4)-beta-D-Xyl-(1-&gt;4)-Rib-ol-P-Rib-ol-P-3-beta-D-GalNAc-(1-&gt;3)-beta-D-GlcNAc-(1-&gt;4)-O-6-P-alpha-D-Man}-L-Thr-[protein] + UDP-alpha-D-xylose = 3-O-{(1-&gt;[3)-alpha-D-Xyl-(1-&gt;3)-beta-D-GlcA-(1-&gt;](n+1)-4)-beta-D-Xyl-(1-&gt;4)-Rib-ol-P-Rib-ol-P-3-beta-D-GalNAc-(1-&gt;3)-beta-D-GlcNAc-(1-&gt;4)-O-6-P-alpha-D-Man}-L-Thr-[protein] + UDP + H(+). The protein operates within protein modification; protein glycosylation. Functionally, bifunctional glycosyltransferase with both alpha-1,3-xylosyltransferase and beta-1,3-glucuronyltransferase activities involved in the maturation of alpha-dystroglycan (DAG1) by glycosylation leading to DAG1 binding to laminin G-like domain-containing extracellular proteins with high affinity and in a phosphorylated-O-mannosyl trisaccharide dependent manner. Elongates the glucuronyl-beta-1,4-xylose-beta disaccharide primer structure by adding repeating units [-3-Xylose-alpha-1,3-GlcA-beta-1-] to produce a heteropolysaccharide. Supports the maturation of DAG1 more effectively than LARGE1. In addition, can modify both heparan sulfate (HS)- and chondroitin/dermatan sulfate (CS/DS)-proteoglycans (PGs), namely GPC4, with a glycosaminoglycan (GAG)-like polysaccharide composed of xylose and glucuronic acid to confer laminin binding. The chain is Xylosyl- and glucuronyltransferase LARGE2 from Homo sapiens (Human).